The chain runs to 312 residues: DNA-directed RNA polymerase subunit alpha (312 aa).

The alpha N-terminal domain (alpha-NTD) stretch occupies residues 1-229 (MLQYQIDRIE…ELFQPLATVT (229 aa)). Positions 239–312 (EPTAEAQIPL…IQIPQSRTSA (74 aa)) are alpha C-terminal domain (alpha-CTD).

The protein belongs to the RNA polymerase alpha chain family. In terms of assembly, in cyanobacteria the RNAP catalytic core is composed of 2 alpha, 1 beta, 1 beta', 1 gamma and 1 omega subunit. When a sigma factor is associated with the core the holoenzyme is formed, which can initiate transcription.

The enzyme catalyses RNA(n) + a ribonucleoside 5'-triphosphate = RNA(n+1) + diphosphate. Its function is as follows. DNA-dependent RNA polymerase catalyzes the transcription of DNA into RNA using the four ribonucleoside triphosphates as substrates. This is DNA-directed RNA polymerase subunit alpha from Synechococcus sp. (strain WH7803).